A 682-amino-acid polypeptide reads, in one-letter code: DNA-directed RNA polymerase subunit beta' (682 aa).

Zn(2+)-binding residues include Cys69, Cys71, Cys87, and Cys90. Asp489, Asp491, and Asp493 together coordinate Mg(2+).

Belongs to the RNA polymerase beta' chain family. RpoC1 subfamily. As to quaternary structure, in plastids the minimal PEP RNA polymerase catalytic core is composed of four subunits: alpha, beta, beta', and beta''. When a (nuclear-encoded) sigma factor is associated with the core the holoenzyme is formed, which can initiate transcription. Mg(2+) serves as cofactor. Requires Zn(2+) as cofactor.

The protein resides in the plastid. It is found in the chloroplast. The enzyme catalyses RNA(n) + a ribonucleoside 5'-triphosphate = RNA(n+1) + diphosphate. In terms of biological role, DNA-dependent RNA polymerase catalyzes the transcription of DNA into RNA using the four ribonucleoside triphosphates as substrates. The sequence is that of DNA-directed RNA polymerase subunit beta' from Oryza nivara (Indian wild rice).